Consider the following 221-residue polypeptide: Ribonuclease T (221 aa).

Positions 21-195 (VVIDIESAGF…YDTIQTAYLF (175 aa)) constitute an Exonuclease domain. Mg(2+)-binding residues include aspartate 24, glutamate 26, histidine 182, and aspartate 187. The active-site Proton donor/acceptor is the histidine 182.

The protein belongs to the RNase T family. As to quaternary structure, homodimer. Requires Mg(2+) as cofactor.

In terms of biological role, trims short 3' overhangs of a variety of RNA species, leaving a one or two nucleotide 3' overhang. Responsible for the end-turnover of tRNA: specifically removes the terminal AMP residue from uncharged tRNA (tRNA-C-C-A). Also appears to be involved in tRNA biosynthesis. The polypeptide is Ribonuclease T (Buchnera aphidicola subsp. Cinara cedri (strain Cc)).